A 782-amino-acid polypeptide reads, in one-letter code: Ribosome biogenesis protein ERB1 (782 aa).

2 disordered regions span residues 1 to 123 (MGSK…RIEK) and 339 to 361 (PEEY…EDRE). The span at 35-86 (SEDEEDYLPSDDDDDVEDSENEGTGASEDDDDDDDDDDILSDDIPSDVDSEE) shows a compositional bias: acidic residues. Over residues 105 to 123 (VDPKREEDDGADRNYRIEK) the composition is skewed to basic and acidic residues. WD repeat units lie at residues 433 to 472 (GHEG…QVWS), 476 to 516 (NSEE…VTPA), 567 to 609 (TVRS…TQIP), 612 to 650 (KLSG…LVKV), 653 to 692 (PGAK…RPYK), 696 to 736 (FHGQ…DQLE), and 752 to 782 (VSKL…RLWM).

It belongs to the WD repeat BOP1/ERB1 family. In terms of assembly, component of the NOP7 complex, composed of ERB1, NOP7 and YTM1. The complex is held together by ERB1, which interacts with NOP7 via its N-terminal domain and with YTM1 via a high-affinity interaction between the seven-bladed beta-propeller domains of the 2 proteins. The NOP7 complex associates with the 66S pre-ribosome.

The protein localises to the nucleus. Its subcellular location is the nucleolus. The protein resides in the nucleoplasm. Component of the NOP7 complex, which is required for maturation of the 25S and 5.8S ribosomal RNAs and formation of the 60S ribosome. The polypeptide is Ribosome biogenesis protein ERB1 (Chaetomium globosum (strain ATCC 6205 / CBS 148.51 / DSM 1962 / NBRC 6347 / NRRL 1970) (Soil fungus)).